The sequence spans 513 residues: Exoglucanase 1 (513 aa).

The N-terminal stretch at 1-17 (MYRKLAVISAFLATARA) is a signal peptide. Q18 carries the post-translational modification Pyrrolidone carboxylic acid. The interval 18–453 (QSACTLQSET…GSTGNPSGGN (436 aa)) is catalytic. Intrachain disulfides connect C21-C89, C36-C42, C67-C88, C78-C84, C155-C414, C189-C227, C193-C226, C247-C273, C255-C260, and C278-C348. An N-linked (GlcNAc) asparagine glycan is attached at N62. E229 serves as the catalytic Nucleophile. E234 serves as the catalytic Proton donor/acceptor. N287 and N401 each carry an N-linked (GlcNAc) asparagine glycan. A compositionally biased stretch (polar residues) spans 401-437 (NETSSTPGAVRGSCSTSSGVPAQVESQSPNAKVTFSN). The disordered stretch occupies residues 401-480 (NETSSTPGAV…TGSSPGPTQS (80 aa)). Positions 449 to 459 (PSGGNPPGGNR) are enriched in gly residues. The interval 454–477 (PPGGNRGTTTTRRPATTTGSSPGP) is linker. A compositionally biased stretch (low complexity) spans 460-478 (GTTTTRRPATTTGSSPGPT). T461 carries an O-linked (Man) threonine glycan. 3 O-linked (Man...) threonine glycosylation sites follow: T462, T463, and T464. An O-linked (Man) threonine glycan is attached at T469. T470 and T471 each carry an O-linked (Man...) threonine glycan. S473 and S474 each carry an O-linked (Man) serine glycan. A CBM1 domain is found at 477-513 (PTQSHYGQCGGIGYSGPTVCASGTTCQVLNPYYSQCL). T478 carries O-linked (Man) threonine glycosylation. O-linked (Man) serine glycosylation is found at S480 and S491. 2 disulfide bridges follow: C485–C502 and C496–C512.

Belongs to the glycosyl hydrolase 7 (cellulase C) family. Post-translationally, N-glycosylated. The catalytic core domain comprises three N-linked glycans which each consist of a single N-acetylglucosamine residue. O-glycosylated. Within the linker domain, all 8 threonines are variably glycosylated with between at least one, and up to three, mannose residues per site. All serines in this domain are at least partially glycosylated with a single mannose residue. O-glycosylation of the cellulase linker provides protection from proteolysis. Linker glycans also contribute to binding affinity of cellobiohydrolases to cellulose.

Its subcellular location is the secreted. The enzyme catalyses Hydrolysis of (1-&gt;4)-beta-D-glucosidic linkages in cellulose and cellotetraose, releasing cellobiose from the non-reducing ends of the chains.. Functionally, exocellobiohydrolases (CBH) that catalyzes the hydrolysis of 1,4-beta-D-glucosidic bonds in cellulose to release the disaccharide cellobiose. The degradation of cellulose involves an interplay between different cellulolytic enzymes. Hydrolysis starts with endoglucanases (EGs), which cut internal beta-1,4-glucosidic bonds in cellulose to reduce the polymerization degree of the substrate and create new chain ends for exocellobiohydrolases (CBHs). The CBHs release the disaccharide cellobiose from the non-reducing end of the cellulose polymer chain. Finally, beta-1,4-glucosidases hydrolyze the cellobiose and other short cello-oligosaccharides into glucose units. This Hypocrea jecorina (Trichoderma reesei) protein is Exoglucanase 1 (cbh1).